Here is a 457-residue protein sequence, read N- to C-terminus: Proton-translocating ferredoxin:NAD(+) oxidoreductase complex subunit C (457 aa).

4Fe-4S ferredoxin-type domains follow at residues 353–386 and 396–427; these read TKND…MLSI and AKEE…YIRY. Positions 365, 368, 371, 375, 405, 408, 411, and 415 each coordinate [4Fe-4S] cluster. A disordered region spans residues 433-457; it reads RAAGEREKAKAAKAKEKKEKEEVLK.

It belongs to the 4Fe4S bacterial-type ferredoxin family. RnfC subfamily. As to quaternary structure, the complex is composed of six subunits: RnfA, RnfB, RnfC, RnfD, RnfE and RnfG. [4Fe-4S] cluster serves as cofactor.

It is found in the cell membrane. Its function is as follows. Part of a membrane-bound complex that couples electron transfer with translocation of ions across the membrane. Couples electron transfer from reduced ferredoxin to NAD(+) with translocation of H(+) out of the cell. Essential for energy conservation during autotrophic growth. Contributes to ATP synthesis during heterotrophic growth. The polypeptide is Proton-translocating ferredoxin:NAD(+) oxidoreductase complex subunit C (Clostridium ljungdahlii (strain ATCC 55383 / DSM 13528 / PETC)).